Here is a 266-residue protein sequence, read N- to C-terminus: Hydroxyethylthiazole kinase (266 aa).

M41 is a binding site for substrate. ATP is bound by residues R117 and S163. A190 provides a ligand contact to substrate.

The protein belongs to the Thz kinase family. Mg(2+) serves as cofactor.

The enzyme catalyses 5-(2-hydroxyethyl)-4-methylthiazole + ATP = 4-methyl-5-(2-phosphooxyethyl)-thiazole + ADP + H(+). The protein operates within cofactor biosynthesis; thiamine diphosphate biosynthesis; 4-methyl-5-(2-phosphoethyl)-thiazole from 5-(2-hydroxyethyl)-4-methylthiazole: step 1/1. In terms of biological role, catalyzes the phosphorylation of the hydroxyl group of 4-methyl-5-beta-hydroxyethylthiazole (THZ). The sequence is that of Hydroxyethylthiazole kinase from Histophilus somni (strain 129Pt) (Haemophilus somnus).